A 303-amino-acid polypeptide reads, in one-letter code: GPN-loop GTPase 2 (303 aa).

29-34 provides a ligand contact to GTP; it reads GSGKST. Positions 85-87 match the Gly-Pro-Asn (GPN)-loop; involved in dimer interface motif; it reads GPN. 187 to 190 provides a ligand contact to GTP; it reads SKMD.

The protein belongs to the GPN-loop GTPase family. As to quaternary structure, heterodimers with gpn1 or gpn3. Binds to RNA polymerase II (RNAPII).

Its function is as follows. Small GTPase required for proper localization of RNA polymerase II and III (RNAPII and RNAPIII). May act at an RNAP assembly step prior to nuclear import. This is GPN-loop GTPase 2 from Xenopus tropicalis (Western clawed frog).